A 130-amino-acid polypeptide reads, in one-letter code: DNA-directed RNA polymerase subunit omega (130 aa).

Disordered stretches follow at residues 80 to 99 (PEPDTVPLIGSAGASVDADD) and 110 to 130 (EELLKGLEGLAPREEQPEEDE). The segment covering 110–124 (EELLKGLEGLAPREE) has biased composition (basic and acidic residues).

The protein belongs to the RNA polymerase subunit omega family. As to quaternary structure, the RNAP catalytic core consists of 2 alpha, 1 beta, 1 beta' and 1 omega subunit. When a sigma factor is associated with the core the holoenzyme is formed, which can initiate transcription.

It carries out the reaction RNA(n) + a ribonucleoside 5'-triphosphate = RNA(n+1) + diphosphate. In terms of biological role, promotes RNA polymerase assembly. Latches the N- and C-terminal regions of the beta' subunit thereby facilitating its interaction with the beta and alpha subunits. The polypeptide is DNA-directed RNA polymerase subunit omega (Nitrobacter hamburgensis (strain DSM 10229 / NCIMB 13809 / X14)).